The following is a 552-amino-acid chain: Glucose-6-phosphate isomerase (552 aa).

Glutamate 357 serves as the catalytic Proton donor. Catalysis depends on residues histidine 388 and lysine 516. Residues 525–552 are disordered; it reads ELASTKPPKHDSSTNALIERYRTRGCRS.

The protein belongs to the GPI family.

The protein resides in the cytoplasm. It carries out the reaction alpha-D-glucose 6-phosphate = beta-D-fructose 6-phosphate. It participates in carbohydrate biosynthesis; gluconeogenesis. The protein operates within carbohydrate degradation; glycolysis; D-glyceraldehyde 3-phosphate and glycerone phosphate from D-glucose: step 2/4. In terms of biological role, catalyzes the reversible isomerization of glucose-6-phosphate to fructose-6-phosphate. In Laribacter hongkongensis (strain HLHK9), this protein is Glucose-6-phosphate isomerase.